We begin with the raw amino-acid sequence, 986 residues long: Bone morphogenetic protein 1 (986 aa).

The first 22 residues, 1 to 22 (MPGVARLPLLLGLLLLPRPGRP), serve as a signal peptide directing secretion. The propeptide occupies 23-120 (LDLADYTYDL…RWRGRSRSRR (98 aa)). A disordered region spans residues 83 to 125 (SIKAAVPGNTSTPSCQSTNGQPQRGACGRWRGRSRSRRAATSR). Residues 90–104 (GNTSTPSCQSTNGQP) are compositionally biased toward polar residues. Residue Asn-91 is glycosylated (N-linked (GlcNAc...) asparagine). The span at 112 to 122 (WRGRSRSRRAA) shows a compositional bias: basic residues. The 200-residue stretch at 121–320 (AATSRPERVW…AQARKLYKCP (200 aa)) folds into the Peptidase M12A domain. Asn-142 carries N-linked (GlcNAc...) asparagine glycosylation. Cystine bridges form between Cys-163/Cys-319, Cys-183/Cys-205, Cys-185/Cys-186, and Cys-322/Cys-348. His-213 serves as a coordination point for Zn(2+). Residue Glu-214 is part of the active site. Residues His-217 and His-223 each contribute to the Zn(2+) site. 2 consecutive CUB domains span residues 322-434 (CGET…YEAI) and 435-546 (CGGD…NFFK). Residues Asn-332 and Asn-363 are each glycosylated (N-linked (GlcNAc...) asparagine). Intrachain disulfides connect Cys-375/Cys-397, Cys-435/Cys-461, Cys-488/Cys-510, Cys-551/Cys-563, Cys-559/Cys-572, Cys-574/Cys-587, Cys-591/Cys-617, Cys-644/Cys-666, Cys-707/Cys-718, Cys-714/Cys-727, Cys-729/Cys-742, Cys-747/Cys-773, Cys-800/Cys-822, Cys-860/Cys-890, and Cys-917/Cys-939. The EGF-like 1; calcium-binding domain occupies 547-588 (EVDECSRPNRGGCEQRCLNTLGSYKCSCDPGYELAPDKRRCE). The CUB 3 domain maps to 591–703 (CGGFLTKLNG…KGFKAHFFSD (113 aa)). Asn-599 carries an N-linked (GlcNAc...) asparagine glycan. An EGF-like 2; calcium-binding domain is found at 704–743 (KDECSKDNGGCQQDCVNTFGSYECQCRSGFVLHDNKHDCK). CUB domains lie at 747–859 (CDHK…HATE) and 860–976 (CGGQ…YTST). Arg-934 and Arg-937 each carry omega-N-methylarginine.

Interacts with POSTN, the interaction promotes deposition on the extracellular matrix. Zn(2+) serves as cofactor. In terms of processing, proteolytically activated in the trans-Golgi network by furin-like/paired basic proprotein convertases, cleavage is not required for secretion. Ubiquitous.

Its subcellular location is the golgi apparatus. The protein resides in the trans-Golgi network. It is found in the secreted. It localises to the extracellular space. The protein localises to the extracellular matrix. The catalysed reaction is Cleavage of the C-terminal propeptide at Ala-|-Asp in type I and II procollagens and at Arg-|-Asp in type III.. With respect to regulation, activity is increased by the procollagen C-endopeptidase enhancer protein. Functionally, metalloprotease that plays key roles in regulating the formation of the extracellular matrix (ECM) via processing of various precursor proteins into mature functional enzymes or structural proteins. Thereby participates in several developmental and physiological processes such as cartilage and bone formation, muscle growth and homeostasis, wound healing and tissue repair. Roles in ECM formation include cleavage of the C-terminal propeptides from procollagens such as procollagen I, II and III or the proteolytic activation of the enzyme lysyl oxidase LOX, necessary to formation of covalent cross-links in collagen and elastic fibers. Additional substrates include matricellular thrombospondin-1/THBS1 whose cleavage leads to cell adhesion disruption and TGF-beta activation. Plays an important role in bone repair by acting as a coactivator of BMP7. In Homo sapiens (Human), this protein is Bone morphogenetic protein 1 (BMP1).